We begin with the raw amino-acid sequence, 327 residues long: Ketol-acid reductoisomerase (NADP(+)) (327 aa).

The KARI N-terminal Rossmann domain occupies 2–182 (AKIYTDKDAS…GATRAGVIET (181 aa)). Residues 25–28 (YGIQ), R48, S53, and 83–86 (DMEQ) contribute to the NADP(+) site. The active site involves H108. Residue G134 coordinates NADP(+). In terms of domain architecture, KARI C-terminal knotted spans 183 to 327 (TFAEETETDL…GAEMRKLLFG (145 aa)). Mg(2+) is bound by residues D191, E195, E227, and E231. Residue S252 coordinates substrate.

It belongs to the ketol-acid reductoisomerase family. Mg(2+) serves as cofactor.

The enzyme catalyses (2R)-2,3-dihydroxy-3-methylbutanoate + NADP(+) = (2S)-2-acetolactate + NADPH + H(+). It catalyses the reaction (2R,3R)-2,3-dihydroxy-3-methylpentanoate + NADP(+) = (S)-2-ethyl-2-hydroxy-3-oxobutanoate + NADPH + H(+). The protein operates within amino-acid biosynthesis; L-isoleucine biosynthesis; L-isoleucine from 2-oxobutanoate: step 2/4. It functions in the pathway amino-acid biosynthesis; L-valine biosynthesis; L-valine from pyruvate: step 2/4. Its function is as follows. Involved in the biosynthesis of branched-chain amino acids (BCAA). Catalyzes an alkyl-migration followed by a ketol-acid reduction of (S)-2-acetolactate (S2AL) to yield (R)-2,3-dihydroxy-isovalerate. In the isomerase reaction, S2AL is rearranged via a Mg-dependent methyl migration to produce 3-hydroxy-3-methyl-2-ketobutyrate (HMKB). In the reductase reaction, this 2-ketoacid undergoes a metal-dependent reduction by NADPH to yield (R)-2,3-dihydroxy-isovalerate. The chain is Ketol-acid reductoisomerase (NADP(+)) from Pyrobaculum neutrophilum (strain DSM 2338 / JCM 9278 / NBRC 100436 / V24Sta) (Thermoproteus neutrophilus).